Reading from the N-terminus, the 72-residue chain is Cell division protein ZapB (72 aa).

Residues 1 to 72 (MSLEILDQLE…RSLLGKIDNV (72 aa)) adopt a coiled-coil conformation. The disordered stretch occupies residues 33-57 (KNNQSQQANDALRSENEQLKSEHQN). The span at 44–57 (LRSENEQLKSEHQN) shows a compositional bias: basic and acidic residues.

The protein belongs to the ZapB family. Homodimer. The ends of the coiled-coil dimer bind to each other, forming polymers. Interacts with FtsZ.

The protein resides in the cytoplasm. Its function is as follows. Non-essential, abundant cell division factor that is required for proper Z-ring formation. It is recruited early to the divisome by direct interaction with FtsZ, stimulating Z-ring assembly and thereby promoting cell division earlier in the cell cycle. Its recruitment to the Z-ring requires functional FtsA or ZipA. This Pasteurella multocida (strain Pm70) protein is Cell division protein ZapB.